A 311-amino-acid polypeptide reads, in one-letter code: Malate dehydrogenase (311 aa).

NAD(+) contacts are provided by residues Gly7–Gly12 and Asp32. Positions 82 and 88 each coordinate substrate. Residues Asn95 and Val118–Asn120 contribute to the NAD(+) site. Substrate is bound by residues Asn120 and Arg151. His175 (proton acceptor) is an active-site residue.

Belongs to the LDH/MDH superfamily. MDH type 3 family. As to quaternary structure, homotetramer.

It catalyses the reaction (S)-malate + NAD(+) = oxaloacetate + NADH + H(+). With respect to regulation, strongly inhibited by iodoacetic acid and CuCl(2). Completely inhibited by N-ethylmaleimide and HgCl(2). Functionally, catalyzes the reversible oxidation of malate to oxaloacetate. Can use both NAD and NADP for malate oxidation, but NADPH cannot be used for oxaloacetate reduction. In Flavobacterium frigidimaris, this protein is Malate dehydrogenase.